A 340-amino-acid chain; its full sequence is Thioesterase pkgB (340 aa).

Zn(2+)-binding residues include His-97, His-99, Asp-101, His-102, and His-205. Asp-101 serves as the catalytic Proton donor/acceptor. Low complexity predominate over residues 242–258 (SSRNGGSTSSIGSVSES). The segment at 242–271 (SSRNGGSTSSIGSVSESGDSDEEDNNMKTS) is disordered.

It belongs to the metallo-beta-lactamase superfamily. Zn(2+) serves as cofactor.

It carries out the reaction 3,5,7,9,11,13-hexaoxotetradecanoyl-[ACP] = dehydrocitreoisocoumarin + holo-[ACP] + H2O. It catalyses the reaction 3,5,7,9,11-pentaoxododecanoyl-[ACP] = 6,8-dihydroxy-3-(2-oxopropyl)-isocoumarin + holo-[ACP] + H2O. Its function is as follows. Thioesterase; part of the pkg gene cluster that mediates the biosynthesis of dihydrocitreoisocoumarin and 6,8-dihydroxy-3-(2-oxopropyl)-isocoumarin. The non-reducing polyketide synthase pkgA performs the condensation of one acetyl-CoA starter unit with 6 and 5 malonyl-CoA units, respectively. As pkgA lacks a releasing domain, the thioesterase pkgB is necessary to break the thioester bond and release dihydrocitreoisocoumarin and 6,8-dihydroxy-3-(2-oxopropyl)-isocoumarin from pkgA. The sequence is that of Thioesterase pkgB from Emericella nidulans (strain FGSC A4 / ATCC 38163 / CBS 112.46 / NRRL 194 / M139) (Aspergillus nidulans).